Reading from the N-terminus, the 917-residue chain is Smoothelin (917 aa).

Position 2 is an N-acetylalanine (A2). Residues 24–89 adopt a coiled-coil conformation; sequence LAERRRIRSA…ARLAGQLESM (66 aa). Residues 157–456 form a disordered region; that stretch reads EVPEREEQEQ…AVGTAEPGGS (300 aa). Residues 177-188 show a composition bias toward polar residues; the sequence is PEGTSQDVTTVT. Composition is skewed to low complexity over residues 193 to 210 and 220 to 232; these read APPG…SSPT and PAEA…EVPG. Pro residues predominate over residues 233–243; it reads SPEPPPSPPKT. The segment covering 244–258 has biased composition (low complexity); it reads TSPEPQESPTLPSTE. The span at 298-326 shows a compositional bias: polar residues; sequence RSLSVLSPRQPAQNRESTPLASGPSSFQR. Phosphoserine is present on residues S299, S301, and S304. Positions 329 to 338 are enriched in basic and acidic residues; that stretch reads SVRDRVHKFT. The residue at position 341 (S341) is a Phosphoserine. Residue T351 is modified to Phosphothreonine. Position 357 is a phosphoserine (S357). A phosphothreonine mark is found at T360 and T373. Positions 363–392 are enriched in low complexity; sequence RLLGPSLTSTTPASSSSGSSSRGPSDTSSR. 4 positions are modified to phosphoserine: S503, S514, S523, and S576. 2 disordered regions span residues 560 to 580 and 617 to 767; these read ANGA…PLSA and QRKR…RKAM. A coiled-coil region spans residues 603-630; that stretch reads EERKLIRAALRELRQRKRDQRDKERERR. Positions 617 to 640 are enriched in basic and acidic residues; the sequence is QRKRDQRDKERERRLQEARGRPGE. Over residues 676-689 the composition is skewed to polar residues; it reads NDGTRTARTTTVES. Positions 701-720 are enriched in low complexity; that stretch reads STMMQTKTFSSSSSSKKMGS. S729 is modified (phosphoserine). The segment covering 738-750 has biased composition (basic and acidic residues); it reads LEKRQAEKKKELM. S792 carries the phosphoserine modification. The region spanning 799–906 is the Calponin-homology (CH) domain; it reads NSIKQMLLDW…YVQSLYNHLR (108 aa).

This sequence belongs to the smoothelin family. Smooth muscle; contractile or vascular (for the long form).

The protein resides in the cytoplasm. Its subcellular location is the cytoskeleton. In terms of biological role, structural protein of the cytoskeleton. In Homo sapiens (Human), this protein is Smoothelin (SMTN).